Reading from the N-terminus, the 273-residue chain is uncharacterized protein (273 aa).

This is an uncharacterized protein from Mycobacterium bovis (strain ATCC BAA-935 / AF2122/97).